A 399-amino-acid polypeptide reads, in one-letter code: [Pyruvate dehydrogenase (acetyl-transferring)] kinase, mitochondrial (399 aa).

The transit peptide at 1–18 directs the protein to the mitochondrion; the sequence is MFLTRRLLGPFTSAIARK. In terms of domain architecture, Histidine kinase spans 123–360; that stretch reads VVETMAEGLI…DAMIFLKAIP (238 aa). Residues 247–254, Asp-286, 305–306, and 321–326 contribute to the ATP site; these read ELFKNSMR, ST, and GYGYGL.

Belongs to the PDK/BCKDK protein kinase family.

It is found in the mitochondrion matrix. It catalyses the reaction L-seryl-[pyruvate dehydrogenase E1 alpha subunit] + ATP = O-phospho-L-seryl-[pyruvate dehydrogenase E1 alpha subunit] + ADP + H(+). In terms of biological role, inhibits the mitochondrial pyruvate dehydrogenase complex by phosphorylation of the E1 alpha subunit, thus contributing to the regulation of glucose metabolism. This is [Pyruvate dehydrogenase (acetyl-transferring)] kinase, mitochondrial from Ascaris suum (Pig roundworm).